A 278-amino-acid polypeptide reads, in one-letter code: Phosphatidylglycerol--prolipoprotein diacylglyceryl transferase (278 aa).

4 helical membrane-spanning segments follow: residues 18 to 38 (IQVH…TILA), 55 to 75 (LILW…VIFE), 90 to 110 (WDGG…VYLF), and 115 to 135 (WIPV…AQGI). Arg137 provides a ligand contact to a 1,2-diacyl-sn-glycero-3-phospho-(1'-sn-glycerol). The next 3 helical transmembrane spans lie at 177 to 197 (QPTF…LMSL), 207 to 227 (GEVF…VEGM), and 237 to 257 (IRVS…ILVF).

The protein belongs to the Lgt family.

It is found in the cell membrane. The catalysed reaction is L-cysteinyl-[prolipoprotein] + a 1,2-diacyl-sn-glycero-3-phospho-(1'-sn-glycerol) = an S-1,2-diacyl-sn-glyceryl-L-cysteinyl-[prolipoprotein] + sn-glycerol 1-phosphate + H(+). Its pathway is protein modification; lipoprotein biosynthesis (diacylglyceryl transfer). Its function is as follows. Catalyzes the transfer of the diacylglyceryl group from phosphatidylglycerol to the sulfhydryl group of the N-terminal cysteine of a prolipoprotein, the first step in the formation of mature lipoproteins. This chain is Phosphatidylglycerol--prolipoprotein diacylglyceryl transferase, found in Pediococcus pentosaceus (strain ATCC 25745 / CCUG 21536 / LMG 10740 / 183-1w).